A 277-amino-acid polypeptide reads, in one-letter code: Phosphate import ATP-binding protein PstB 2 (277 aa).

In terms of domain architecture, ABC transporter spans 31-272 (IEVPGLSLFY…PAKKQTEDYI (242 aa)). 63–70 (GPSGCGKS) contacts ATP.

This sequence belongs to the ABC transporter superfamily. Phosphate importer (TC 3.A.1.7) family. The complex is composed of two ATP-binding proteins (PstB), two transmembrane proteins (PstC and PstA) and a solute-binding protein (PstS).

The protein localises to the cell inner membrane. It carries out the reaction phosphate(out) + ATP + H2O = ADP + 2 phosphate(in) + H(+). In terms of biological role, part of the ABC transporter complex PstSACB involved in phosphate import. Responsible for energy coupling to the transport system. In Pseudomonas putida (strain ATCC 47054 / DSM 6125 / CFBP 8728 / NCIMB 11950 / KT2440), this protein is Phosphate import ATP-binding protein PstB 2.